We begin with the raw amino-acid sequence, 1203 residues long: ATP-dependent helicase/nuclease subunit A (1203 aa).

Positions 4–472 (VKLTPEQNEA…IRLKENFRSR (469 aa)) constitute a UvrD-like helicase ATP-binding domain. Position 25–32 (25–32 (ASAGSGKT)) interacts with ATP. A UvrD-like helicase C-terminal domain is found at 503-785 (VQGNISDYPV…RVMTFHKSKG (283 aa)).

The protein belongs to the helicase family. AddA subfamily. In terms of assembly, heterodimer of AddA and AddB/RexB. Mg(2+) serves as cofactor.

The catalysed reaction is Couples ATP hydrolysis with the unwinding of duplex DNA by translocating in the 3'-5' direction.. The enzyme catalyses ATP + H2O = ADP + phosphate + H(+). The heterodimer acts as both an ATP-dependent DNA helicase and an ATP-dependent, dual-direction single-stranded exonuclease. Recognizes the chi site generating a DNA molecule suitable for the initiation of homologous recombination. The AddA nuclease domain is required for chi fragment generation; this subunit has the helicase and 3' -&gt; 5' nuclease activities. This is ATP-dependent helicase/nuclease subunit A from Lactococcus lactis subsp. cremoris (strain SK11).